A 239-amino-acid polypeptide reads, in one-letter code: Uridylate kinase (239 aa).

Residue 10–13 (KISG) participates in ATP binding. An involved in allosteric activation by GTP region spans residues 18 to 23 (GESGYG). UMP is bound at residue Gly-52. Positions 53 and 57 each coordinate ATP. Residues Asp-72 and 133-140 (TGNPYFTT) each bind UMP. ATP contacts are provided by Thr-160, Tyr-166, and Asp-169.

The protein belongs to the UMP kinase family. As to quaternary structure, homohexamer.

Its subcellular location is the cytoplasm. The catalysed reaction is UMP + ATP = UDP + ADP. The protein operates within pyrimidine metabolism; CTP biosynthesis via de novo pathway; UDP from UMP (UMPK route): step 1/1. With respect to regulation, allosterically activated by GTP. Inhibited by UTP. Its function is as follows. Catalyzes the reversible phosphorylation of UMP to UDP. This Chlorobaculum tepidum (strain ATCC 49652 / DSM 12025 / NBRC 103806 / TLS) (Chlorobium tepidum) protein is Uridylate kinase.